The sequence spans 43 residues: Avenin-F (43 aa).

The segment at 1 to 23 (TTTVQYDPSEQYQPYPEQQEPFV) is disordered. The segment covering 10-23 (EQYQPYPEQQEPFV) has biased composition (low complexity). Residues 21–26 (PFVQQQ) form repeat 1. A 3 X 6 aa tandem repeats of P-F-V-Q-Q-Q region spans residues 21–40 (PFVQQQPPFVQQQQPFVQQQ). The stretch at 27–34 (PPFVQQQQ) is one 2; approximate repeat. The stretch at 35-40 (PFVQQQ) is repeat 3.

Belongs to the gliadin/glutenin family. Monomer.

It is found in the vacuole. Its subcellular location is the aleurone grain. Functionally, seed storage protein. Serves as a source of nitrogen, carbon, and sulfur for the young developing seedling. In Avena sativa (Oat), this protein is Avenin-F.